The sequence spans 96 residues: Complement inhibitor RaCI4 (96 aa).

Positions 1 to 24 (MSAFNIFALVVVVCALMINECCTS) are cleaved as a signal peptide. 3 cysteine pairs are disulfide-bonded: cysteine 37-cysteine 61, cysteine 42-cysteine 63, and cysteine 57-cysteine 78.

It belongs to the RaCI family. In terms of tissue distribution, expressed in salivary glands.

The protein localises to the secreted. In terms of biological role, complement inhibitor. Prevents complement-mediated C5 activation by binding to C5. Binds C5 at a different binding site than the other tick complement inhibitors OmCI and CirpT1, and the drug eculizumab. Inhibits complement in human and guinea pig but not in other species tested (rabbit, rat, mouse, and pig). The protein is Complement inhibitor RaCI4 of Hyalomma rufipes (Tick).